The following is a 311-amino-acid chain: Ribosomal RNA large subunit methyltransferase F (311 aa).

The protein belongs to the methyltransferase superfamily. METTL16/RlmF family.

It localises to the cytoplasm. The enzyme catalyses adenosine(1618) in 23S rRNA + S-adenosyl-L-methionine = N(6)-methyladenosine(1618) in 23S rRNA + S-adenosyl-L-homocysteine + H(+). Specifically methylates the adenine in position 1618 of 23S rRNA. This chain is Ribosomal RNA large subunit methyltransferase F, found in Pectobacterium atrosepticum (strain SCRI 1043 / ATCC BAA-672) (Erwinia carotovora subsp. atroseptica).